The following is a 157-amino-acid chain: Isotocin-neurophysin IT 1 (157 aa).

A signal peptide spans 1–20 (MFGTSVSALCLLFLLSVCTA). A disulfide bond links Cys21 and Cys26. Glycine amide is present on Gly29. Cystine bridges form between Cys42/Cys86, Cys45/Cys59, Cys53/Cys76, Cys60/Cys66, Cys93/Cys106, Cys100/Cys118, and Cys107/Cys112.

This sequence belongs to the vasopressin/oxytocin family. Seven disulfide bonds are present in neurophysin.

Its subcellular location is the secreted. Isotocin causes contraction of smooth muscles. The chain is Isotocin-neurophysin IT 1 from Oncorhynchus keta (Chum salmon).